Here is a 350-residue protein sequence, read N- to C-terminus: Thymidine kinase (350 aa).

Position 17 to 24 (17 to 24 (GPFGIGKT)) interacts with ATP. Residue Glu-45 is the Proton acceptor of the active site. Residue Gln-86 participates in substrate binding. Arg-176 serves as a coordination point for ATP. Arg-182 is a substrate binding site.

This sequence belongs to the herpesviridae thymidine kinase family. In terms of assembly, homodimer.

The enzyme catalyses thymidine + ATP = dTMP + ADP + H(+). Its function is as follows. Catalyzes the transfer of the gamma-phospho group of ATP to thymidine to generate dTMP in the salvage pathway of pyrimidine synthesis. The dTMP serves as a substrate for DNA polymerase during viral DNA replication. Allows the virus to be reactivated and to grow in non-proliferative cells lacking a high concentration of phosphorylated nucleic acid precursors. The chain is Thymidine kinase from Gallus gallus (Chicken).